The chain runs to 89 residues: Small ribosomal subunit protein uS15 (89 aa).

The protein belongs to the universal ribosomal protein uS15 family. Part of the 30S ribosomal subunit. Forms a bridge to the 50S subunit in the 70S ribosome, contacting the 23S rRNA.

Functionally, one of the primary rRNA binding proteins, it binds directly to 16S rRNA where it helps nucleate assembly of the platform of the 30S subunit by binding and bridging several RNA helices of the 16S rRNA. Its function is as follows. Forms an intersubunit bridge (bridge B4) with the 23S rRNA of the 50S subunit in the ribosome. The chain is Small ribosomal subunit protein uS15 from Limosilactobacillus fermentum (strain NBRC 3956 / LMG 18251) (Lactobacillus fermentum).